The primary structure comprises 426 residues: Proline--tRNA ligase (426 aa).

The protein belongs to the class-II aminoacyl-tRNA synthetase family. ProS type 2 subfamily. As to quaternary structure, homodimer.

Its subcellular location is the cytoplasm. The catalysed reaction is tRNA(Pro) + L-proline + ATP = L-prolyl-tRNA(Pro) + AMP + diphosphate. Functionally, catalyzes the attachment of proline to tRNA(Pro) in a two-step reaction: proline is first activated by ATP to form Pro-AMP and then transferred to the acceptor end of tRNA(Pro). This chain is Proline--tRNA ligase, found in Rickettsia peacockii (strain Rustic).